A 100-amino-acid chain; its full sequence is MTKVTREEVEHIANLARLQISPEETEEMANTLESILDFAKQNDSADTEGVEPTYHVLDLQNVLREDKAIKGIPQELALKNAKETEDGQFKVPTIMNEEDL.

It belongs to the GatC family. In terms of assembly, heterotrimer of A, B and C subunits.

It catalyses the reaction L-glutamyl-tRNA(Gln) + L-glutamine + ATP + H2O = L-glutaminyl-tRNA(Gln) + L-glutamate + ADP + phosphate + H(+). It carries out the reaction L-aspartyl-tRNA(Asn) + L-glutamine + ATP + H2O = L-asparaginyl-tRNA(Asn) + L-glutamate + ADP + phosphate + 2 H(+). Functionally, allows the formation of correctly charged Asn-tRNA(Asn) or Gln-tRNA(Gln) through the transamidation of misacylated Asp-tRNA(Asn) or Glu-tRNA(Gln) in organisms which lack either or both of asparaginyl-tRNA or glutaminyl-tRNA synthetases. The reaction takes place in the presence of glutamine and ATP through an activated phospho-Asp-tRNA(Asn) or phospho-Glu-tRNA(Gln). This is Aspartyl/glutamyl-tRNA(Asn/Gln) amidotransferase subunit C from Staphylococcus aureus (strain Newman).